Consider the following 346-residue polypeptide: GTPase Obg (346 aa).

The Obg domain maps to Met1–Leu159. The interval Leu128–Glu148 is disordered. Residues Phe130–Gly144 are compositionally biased toward polar residues. Positions Ala160 to Glu335 constitute an OBG-type G domain. GTP is bound by residues Gly166–Ser173, Phe191–Tyr195, Asp213–Gly216, Asn285–Asp288, and Ser316–Leu318. Ser173 and Thr193 together coordinate Mg(2+).

This sequence belongs to the TRAFAC class OBG-HflX-like GTPase superfamily. OBG GTPase family. Monomer. Requires Mg(2+) as cofactor.

It is found in the cytoplasm. Functionally, an essential GTPase which binds GTP, GDP and possibly (p)ppGpp with moderate affinity, with high nucleotide exchange rates and a fairly low GTP hydrolysis rate. Plays a role in control of the cell cycle, stress response, ribosome biogenesis and in those bacteria that undergo differentiation, in morphogenesis control. In Halorhodospira halophila (strain DSM 244 / SL1) (Ectothiorhodospira halophila (strain DSM 244 / SL1)), this protein is GTPase Obg.